The primary structure comprises 327 residues: Phenylalanine--tRNA ligase alpha subunit (327 aa).

Glu-252 lines the Mg(2+) pocket.

Belongs to the class-II aminoacyl-tRNA synthetase family. Phe-tRNA synthetase alpha subunit type 1 subfamily. Tetramer of two alpha and two beta subunits. It depends on Mg(2+) as a cofactor.

The protein resides in the cytoplasm. The enzyme catalyses tRNA(Phe) + L-phenylalanine + ATP = L-phenylalanyl-tRNA(Phe) + AMP + diphosphate + H(+). This Shigella flexneri protein is Phenylalanine--tRNA ligase alpha subunit.